Reading from the N-terminus, the 456-residue chain is Bifunctional protein GlmU (456 aa).

The pyrophosphorylase stretch occupies residues 1-229 (MLNSAMSVVI…LSEVEGVNNR (229 aa)). Residues 11-14 (LAAG), K25, Q76, 81-82 (GT), 103-105 (YGD), G140, E154, N169, and N227 each bind UDP-N-acetyl-alpha-D-glucosamine. Residue D105 coordinates Mg(2+). N227 is a Mg(2+) binding site. A linker region spans residues 230–250 (LQLSALERIYQREQADKLLLA). The interval 251 to 456 (GVMLLDPARF…SGWQRPVKKK (206 aa)) is N-acetyltransferase. Positions 333 and 351 each coordinate UDP-N-acetyl-alpha-D-glucosamine. H363 (proton acceptor) is an active-site residue. Positions 366 and 377 each coordinate UDP-N-acetyl-alpha-D-glucosamine. Acetyl-CoA-binding positions include A380, 386–387 (NY), S405, A423, and R440.

This sequence in the N-terminal section; belongs to the N-acetylglucosamine-1-phosphate uridyltransferase family. The protein in the C-terminal section; belongs to the transferase hexapeptide repeat family. As to quaternary structure, homotrimer. The cofactor is Mg(2+).

Its subcellular location is the cytoplasm. It carries out the reaction alpha-D-glucosamine 1-phosphate + acetyl-CoA = N-acetyl-alpha-D-glucosamine 1-phosphate + CoA + H(+). The enzyme catalyses N-acetyl-alpha-D-glucosamine 1-phosphate + UTP + H(+) = UDP-N-acetyl-alpha-D-glucosamine + diphosphate. The protein operates within nucleotide-sugar biosynthesis; UDP-N-acetyl-alpha-D-glucosamine biosynthesis; N-acetyl-alpha-D-glucosamine 1-phosphate from alpha-D-glucosamine 6-phosphate (route II): step 2/2. It participates in nucleotide-sugar biosynthesis; UDP-N-acetyl-alpha-D-glucosamine biosynthesis; UDP-N-acetyl-alpha-D-glucosamine from N-acetyl-alpha-D-glucosamine 1-phosphate: step 1/1. Its pathway is bacterial outer membrane biogenesis; LPS lipid A biosynthesis. In terms of biological role, catalyzes the last two sequential reactions in the de novo biosynthetic pathway for UDP-N-acetylglucosamine (UDP-GlcNAc). The C-terminal domain catalyzes the transfer of acetyl group from acetyl coenzyme A to glucosamine-1-phosphate (GlcN-1-P) to produce N-acetylglucosamine-1-phosphate (GlcNAc-1-P), which is converted into UDP-GlcNAc by the transfer of uridine 5-monophosphate (from uridine 5-triphosphate), a reaction catalyzed by the N-terminal domain. In Pectobacterium atrosepticum (strain SCRI 1043 / ATCC BAA-672) (Erwinia carotovora subsp. atroseptica), this protein is Bifunctional protein GlmU.